We begin with the raw amino-acid sequence, 189 residues long: uncharacterized protein (189 aa).

Belongs to the flavoredoxin family. FMN is required as a cofactor.

This is an uncharacterized protein from Escherichia coli (strain K12).